Reading from the N-terminus, the 146-residue chain is Hemoglobin subunit beta-1 (146 aa).

Residues 2–146 (HWTEKERTII…VVSALGKQYH (145 aa)) enclose the Globin domain. Residues histidine 63 and histidine 92 each coordinate heme b.

This sequence belongs to the globin family. Hb1 is a heterotetramer of two alpha chains and two beta-1 chains. In terms of tissue distribution, red blood cells.

In terms of biological role, involved in oxygen transport from gills to the various peripheral tissues. In Dissostichus eleginoides (Patagonian toothfish), this protein is Hemoglobin subunit beta-1.